Consider the following 216-residue polypeptide: Homologous-pairing protein 2 (216 aa).

The protein belongs to the HOP2 family. Interacts with mcp7.

The protein resides in the nucleus. Required for proper homologous pairing and efficient cross-over and intragenic recombination during meiosis. Acts indirectly in a process facilitating homologous recombination. Acts during mid- to late-horse-tail period. The chain is Homologous-pairing protein 2 (meu13) from Schizosaccharomyces pombe (strain 972 / ATCC 24843) (Fission yeast).